Here is a 218-residue protein sequence, read N- to C-terminus: Small ribosomal subunit protein uS3c (218 aa).

A KH type-2 domain is found at 47–118 (VQKNMRTSSG…KLNIAVTRIA (72 aa)).

Belongs to the universal ribosomal protein uS3 family. In terms of assembly, part of the 30S ribosomal subunit.

The protein localises to the plastid. The protein resides in the chloroplast. The sequence is that of Small ribosomal subunit protein uS3c (rps3) from Atropa belladonna (Belladonna).